Reading from the N-terminus, the 246-residue chain is DNA repair protein RecO (246 aa).

The protein belongs to the RecO family.

Functionally, involved in DNA repair and RecF pathway recombination. The polypeptide is DNA repair protein RecO (Methylorubrum extorquens (strain CM4 / NCIMB 13688) (Methylobacterium extorquens)).